Consider the following 600-residue polypeptide: Torsin-1A-interacting protein 1 (600 aa).

Residues methionine 1–glycine 14 show a composition bias toward basic and acidic residues. Disordered regions lie at residues methionine 1–serine 261 and methionine 310–serine 346. Residues methionine 1–arginine 354 are Nuclear-facing. Phosphoserine is present on serine 61. Composition is skewed to basic and acidic residues over residues phenylalanine 71–arginine 81, phenylalanine 91–glutamate 102, and arginine 116–threonine 125. Residues serine 137, serine 145, serine 156, serine 158, serine 159, and serine 189 each carry the phosphoserine modification. Positions proline 192 to serine 203 are enriched in low complexity. Acidic residues predominate over residues glutamate 219–aspartate 232. Residue threonine 223 is modified to Phosphothreonine. 3 positions are modified to phosphoserine: serine 230, serine 233, and serine 244. Residues serine 247–serine 261 are compositionally biased toward polar residues. Residue serine 322 is modified to Phosphoserine. Residue lysine 325 forms a Glycyl lysine isopeptide (Lys-Gly) (interchain with G-Cter in SUMO2) linkage. The span at lysine 325–serine 346 shows a compositional bias: polar residues. Serine 332 is subject to Phosphoserine. A helical membrane pass occupies residues tyrosine 355 to tyrosine 371. At threonine 372–leucine 600 the chain is on the perinuclear space side. An interaction with TOR1A region spans residues arginine 373 to leucine 600. A coiled-coil region spans residues glutamate 376–serine 452. Asparagine 416 carries an N-linked (GlcNAc...) asparagine glycan.

The protein belongs to the TOR1AIP family. As to quaternary structure, interacts with ATP1B4. Interacts with TOR1A (ATP-bound). Interacts with TOR1B, TOR2A and TOR3A. Interacts with VIM.

It localises to the nucleus inner membrane. Functionally, required for nuclear membrane integrity. Induces TOR1A and TOR1B ATPase activity and is required for their location on the nuclear membrane. Binds to A- and B-type lamins. Possible role in membrane attachment and assembly of the nuclear lamina. The sequence is that of Torsin-1A-interacting protein 1 (TOR1AIP1) from Bos taurus (Bovine).